We begin with the raw amino-acid sequence, 156 residues long: Transcriptional regulator MraZ (156 aa).

2 consecutive SpoVT-AbrB domains span residues 5 to 51 (TFEK…GKAL) and 80 to 123 (MAKL…SREA).

Belongs to the MraZ family. As to quaternary structure, forms oligomers.

It localises to the cytoplasm. It is found in the nucleoid. This chain is Transcriptional regulator MraZ, found in Caulobacter vibrioides (strain ATCC 19089 / CIP 103742 / CB 15) (Caulobacter crescentus).